The following is a 244-amino-acid chain: Type III pantothenate kinase (244 aa).

8–15 contributes to the ATP binding site; the sequence is DQGNSACK. Residues Tyr88 and 94-97 contribute to the substrate site; that span reads GADR. Asp96 functions as the Proton acceptor in the catalytic mechanism. A K(+)-binding site is contributed by Asp117. ATP is bound at residue Thr120. Thr175 serves as a coordination point for substrate.

It belongs to the type III pantothenate kinase family. As to quaternary structure, homodimer. It depends on NH4(+) as a cofactor. Requires K(+) as cofactor.

Its subcellular location is the cytoplasm. The enzyme catalyses (R)-pantothenate + ATP = (R)-4'-phosphopantothenate + ADP + H(+). It participates in cofactor biosynthesis; coenzyme A biosynthesis; CoA from (R)-pantothenate: step 1/5. Catalyzes the phosphorylation of pantothenate (Pan), the first step in CoA biosynthesis. This Porphyromonas gingivalis (strain ATCC BAA-308 / W83) protein is Type III pantothenate kinase.